Consider the following 339-residue polypeptide: MADLKPYIAKAASGEPLSLGDAKAAFDIMMSGQATPSQIGGFLMALRVRGETVPEIAGAVASMRSRMIPVIAPDDAMDIVGTGGDQSGSYNVSSCTAFVVAGAGVPVAKHGNRALSSRSGAADALAALGINIEADADTIGRSISEAGLGFMFAPMHHSAMRHVGPSRVELGTRTIFNLLGPLSNPASVKRQLVGVFAPQWLEPLAHVLKELGSETAWVVYGDGLDEMTTAGTTQVAALENGQIRTFEITPEEVGLRRCSPAELKGGEAAENAKALLGVLEGKDSAYRDIVLLNSGAALVVAGKAENLKDGIAQAVQSIDSGAALAVLQKVIAVSNDKPA.

Residues Gly81, 84–85, Ser89, 91–94, 109–117, and Ala121 contribute to the 5-phospho-alpha-D-ribose 1-diphosphate site; these read GD, NVSS, and KHGNRALSS. Anthranilate is bound at residue Gly81. Ser93 serves as a coordination point for Mg(2+). Asn112 contacts anthranilate. Arg167 contacts anthranilate. Mg(2+) contacts are provided by Asp225 and Glu226.

This sequence belongs to the anthranilate phosphoribosyltransferase family. As to quaternary structure, homodimer. It depends on Mg(2+) as a cofactor.

It catalyses the reaction N-(5-phospho-beta-D-ribosyl)anthranilate + diphosphate = 5-phospho-alpha-D-ribose 1-diphosphate + anthranilate. It participates in amino-acid biosynthesis; L-tryptophan biosynthesis; L-tryptophan from chorismate: step 2/5. Functionally, catalyzes the transfer of the phosphoribosyl group of 5-phosphorylribose-1-pyrophosphate (PRPP) to anthranilate to yield N-(5'-phosphoribosyl)-anthranilate (PRA). The polypeptide is Anthranilate phosphoribosyltransferase (Brucella canis (strain ATCC 23365 / NCTC 10854 / RM-666)).